The following is a 105-amino-acid chain: Putative membrane protein insertion efficiency factor (105 aa).

The segment at 76–105 is disordered; sequence GHPGGVDPVPPGPHETPRKTSTHDDEPPSR. The span at 90-105 shows a compositional bias: basic and acidic residues; it reads ETPRKTSTHDDEPPSR.

This sequence belongs to the UPF0161 family.

It is found in the cell inner membrane. Could be involved in insertion of integral membrane proteins into the membrane. The sequence is that of Putative membrane protein insertion efficiency factor from Chromohalobacter salexigens (strain ATCC BAA-138 / DSM 3043 / CIP 106854 / NCIMB 13768 / 1H11).